Reading from the N-terminus, the 309-residue chain is MILENLFKNLIYDPVSVLGLLVFYILLVNLPISLGAFFQKKSFFIVRVLTILINFLITLQLLFRWSISGHFPISNLYESLYFLTWGITMGQLLIEREYQSPIIPSIAIPIELLTVAFACFVLPDDLKISSNLVPALRSSWLVMHVSVVMLSYAALIIGSLLSASVLFINKNKPLQIRSSSTGIGGFKISNNYPLNELVEPIEFSHSEELDTLSYRSILIGFVLLTLGLISGAVWANEAWGTWWSWDPKETWAFISWMFYAAYLHMRISKGWQGRRPALLATTGFLVVLICYLGVNFLGIGLHSYGWIFG.

The next 8 membrane-spanning stretches (helical) occupy residues 18–38, 43–63, 67–87, 102–122, 148–168, 216–236, 250–267, and 279–299; these read LGLL…GAFF, FFIV…QLLF, ISGH…TWGI, IIPS…CFVL, VMLS…VLFI, SILI…VWAN, TWAF…HMRI, and LATT…FLGI.

Belongs to the CcmF/CycK/Ccl1/NrfE/CcsA family. In terms of assembly, may interact with ccs1.

Its subcellular location is the cellular thylakoid membrane. Its function is as follows. Required during biogenesis of c-type cytochromes (cytochrome c6 and cytochrome f) at the step of heme attachment. This is Cytochrome c biogenesis protein CcsA from Prochlorococcus marinus (strain MIT 9215).